Here is a 147-residue protein sequence, read N- to C-terminus: Large ribosomal subunit protein uL15 (147 aa).

The tract at residues 21-49 is disordered; that stretch reads RVGRGEGSKGKTAGRGTKGTKARAPVRPG.

This sequence belongs to the universal ribosomal protein uL15 family. Part of the 50S ribosomal subunit.

In terms of biological role, binds to the 23S rRNA. The polypeptide is Large ribosomal subunit protein uL15 (Tropheryma whipplei (strain TW08/27) (Whipple's bacillus)).